The primary structure comprises 427 residues: Gamma-glutamyl phosphate reductase (427 aa).

Belongs to the gamma-glutamyl phosphate reductase family.

Its subcellular location is the cytoplasm. The catalysed reaction is L-glutamate 5-semialdehyde + phosphate + NADP(+) = L-glutamyl 5-phosphate + NADPH + H(+). It functions in the pathway amino-acid biosynthesis; L-proline biosynthesis; L-glutamate 5-semialdehyde from L-glutamate: step 2/2. Functionally, catalyzes the NADPH-dependent reduction of L-glutamate 5-phosphate into L-glutamate 5-semialdehyde and phosphate. The product spontaneously undergoes cyclization to form 1-pyrroline-5-carboxylate. In Anaeromyxobacter sp. (strain K), this protein is Gamma-glutamyl phosphate reductase.